The sequence spans 335 residues: Pyridoxal 5'-phosphate synthase subunit PdxS (335 aa).

D-ribose 5-phosphate is bound at residue aspartate 30. Lysine 87 (schiff-base intermediate with D-ribose 5-phosphate) is an active-site residue. Glycine 159 contributes to the D-ribose 5-phosphate binding site. D-glyceraldehyde 3-phosphate is bound at residue arginine 171. Residues glycine 257 and 278-279 each bind D-ribose 5-phosphate; that span reads GS.

It belongs to the PdxS/SNZ family. In the presence of PdxT, forms a dodecamer of heterodimers.

The catalysed reaction is aldehydo-D-ribose 5-phosphate + D-glyceraldehyde 3-phosphate + L-glutamine = pyridoxal 5'-phosphate + L-glutamate + phosphate + 3 H2O + H(+). It functions in the pathway cofactor biosynthesis; pyridoxal 5'-phosphate biosynthesis. Its function is as follows. Catalyzes the formation of pyridoxal 5'-phosphate from ribose 5-phosphate (RBP), glyceraldehyde 3-phosphate (G3P) and ammonia. The ammonia is provided by the PdxT subunit. Can also use ribulose 5-phosphate and dihydroxyacetone phosphate as substrates, resulting from enzyme-catalyzed isomerization of RBP and G3P, respectively. The polypeptide is Pyridoxal 5'-phosphate synthase subunit PdxS (Pyrococcus furiosus (strain ATCC 43587 / DSM 3638 / JCM 8422 / Vc1)).